Consider the following 555-residue polypeptide: MDIKRTILWVIFSMSLVLLYDNWQRANGHASMFFPSATQQQAASAPAASAAQGDVPKANATAGAAAPAAPGGAPQAAAQPTGEKIIVTTDEVRAEIDTAGGILSRLELLNEHEKDGKPVVLFERDTTRTYMARSGLIGGDLPNHTTVFTATPGPRTLDGADKLEVTLTADKNGVKFVKTYVFHKGSYVVDARFAVTNDGTAPVSPTLYMELARDGSKVEQSQFYSTFTGPAIYTDADKYHKITFDDIAKGKASTPAATTSGWVAMVQHYFASAWIPQAGKEHSFYVQQIDPNLYRVGIQQPLGQIAPGATVTTDARLFAGPQEERMLEKITPGLELVKDYGWLTILAKPLFWLLEKLHGFLNNWGWSIIALTVLIKLVFFPLSAASYKSMGKMKDLQPRMTSIRERHKGDPQKMNAEMMALYKTEKVNPLGGCLPIVIQIPVFIALYWVLLSSVEMRGAPWLGWIHDLSVPDPFYILPIVMAVSMFVQTRLNPTPPDPVQAKVMMIMPLVFSFMFFFFPAGLVLYWVVNNILSIAQQWQINRMLGKGKTAAVAKS.

Residues 7–24 (ILWVIFSMSLVLLYDNWQ) traverse the membrane as a helical segment. Positions 61–81 (TAGAAAPAAPGGAPQAAAQPT) are disordered. 5 helical membrane passes run 341 to 361 (GWLT…HGFL), 364 to 384 (WGWS…PLSA), 430 to 450 (LGGC…YWVL), 468 to 488 (LSVP…MFVQ), and 503 to 523 (VMMI…AGLV).

It belongs to the OXA1/ALB3/YidC family. Type 1 subfamily. As to quaternary structure, interacts with the Sec translocase complex via SecD. Specifically interacts with transmembrane segments of nascent integral membrane proteins during membrane integration.

The protein resides in the cell inner membrane. Its function is as follows. Required for the insertion and/or proper folding and/or complex formation of integral membrane proteins into the membrane. Involved in integration of membrane proteins that insert both dependently and independently of the Sec translocase complex, as well as at least some lipoproteins. Aids folding of multispanning membrane proteins. The polypeptide is Membrane protein insertase YidC (Cupriavidus pinatubonensis (strain JMP 134 / LMG 1197) (Cupriavidus necator (strain JMP 134))).